The following is a 157-amino-acid chain: Crossover junction endodeoxyribonuclease RuvC (157 aa).

Active-site residues include D7, E66, and D139. Residues D7, E66, and D139 each coordinate Mg(2+).

It belongs to the RuvC family. As to quaternary structure, homodimer which binds Holliday junction (HJ) DNA. The HJ becomes 2-fold symmetrical on binding to RuvC with unstacked arms; it has a different conformation from HJ DNA in complex with RuvA. In the full resolvosome a probable DNA-RuvA(4)-RuvB(12)-RuvC(2) complex forms which resolves the HJ. Requires Mg(2+) as cofactor.

The protein resides in the cytoplasm. The catalysed reaction is Endonucleolytic cleavage at a junction such as a reciprocal single-stranded crossover between two homologous DNA duplexes (Holliday junction).. Its function is as follows. The RuvA-RuvB-RuvC complex processes Holliday junction (HJ) DNA during genetic recombination and DNA repair. Endonuclease that resolves HJ intermediates. Cleaves cruciform DNA by making single-stranded nicks across the HJ at symmetrical positions within the homologous arms, yielding a 5'-phosphate and a 3'-hydroxyl group; requires a central core of homology in the junction. The consensus cleavage sequence is 5'-(A/T)TT(C/G)-3'. Cleavage occurs on the 3'-side of the TT dinucleotide at the point of strand exchange. HJ branch migration catalyzed by RuvA-RuvB allows RuvC to scan DNA until it finds its consensus sequence, where it cleaves and resolves the cruciform DNA. This is Crossover junction endodeoxyribonuclease RuvC from Helicobacter acinonychis (strain Sheeba).